The sequence spans 391 residues: Probable sugar efflux transporter (391 aa).

12 consecutive transmembrane segments (helical) span residues 16-36, 51-71, 82-102, 110-130, 138-158, 170-190, 210-230, 247-267, 277-297, 300-320, 338-358, and 361-381; these read VFVF…PVAL, VGLM…PLML, LLFL…AWNF, MGIA…VIRV, QALG…LPLG, TFGV…KLLP, PLLM…FTTY, ITTL…FLFG, FIAF…VFKN, WVVF…GISL, IYSG…SIVI, and LGLG…LFWL.

It belongs to the major facilitator superfamily. SotB (TC 2.A.1.2) family.

It is found in the cell inner membrane. Involved in the efflux of sugars. The physiological role may be the reduction of the intracellular concentration of toxic sugars or sugar metabolites. The protein is Probable sugar efflux transporter of Helicobacter pylori (strain ATCC 700392 / 26695) (Campylobacter pylori).